Here is a 429-residue protein sequence, read N- to C-terminus: Adenylosuccinate synthetase (429 aa).

Residues 12–18 (GDEGKGK) and 40–42 (GHT) contribute to the GTP site. Residue aspartate 13 is the Proton acceptor of the active site. Mg(2+)-binding residues include aspartate 13 and glycine 40. Residues 13 to 16 (DEGK), 38 to 41 (NAGH), threonine 128, arginine 142, glutamine 223, threonine 238, and arginine 302 each bind IMP. The active-site Proton donor is the histidine 41. Residue 298–304 (VNTGRPR) participates in substrate binding. GTP-binding positions include arginine 304, 330-332 (KLD), and 412-414 (GVG).

Belongs to the adenylosuccinate synthetase family. In terms of assembly, homodimer. Mg(2+) serves as cofactor.

The protein localises to the cytoplasm. The catalysed reaction is IMP + L-aspartate + GTP = N(6)-(1,2-dicarboxyethyl)-AMP + GDP + phosphate + 2 H(+). Its pathway is purine metabolism; AMP biosynthesis via de novo pathway; AMP from IMP: step 1/2. Plays an important role in the de novo pathway of purine nucleotide biosynthesis. Catalyzes the first committed step in the biosynthesis of AMP from IMP. This chain is Adenylosuccinate synthetase, found in Kocuria rhizophila (strain ATCC 9341 / DSM 348 / NBRC 103217 / DC2201).